The sequence spans 440 residues: Branched-chain amino acid permease BrnQ (440 aa).

12 helical membrane passes run 9-29 (YIIIIGLMLFALFFGAGNLIF), 46-66 (AGFLVTGVGLPLLAITAFVFS), 80-100 (PVFGIVFTTILYLAIGPFFAI), 121-141 (SPVSLIIFTILFFALACLLSL), 149-169 (IVGKFLTPIKLTFIGLLVAVA), 196-216 (GYLTLDALVAFVFGIIIVNAL), 227-247 (LIVVCAKAAAIAAVLLAVMYT), 284-304 (ILLGLMITVACLTTSVGLITA), 321-341 (IAVVLSVFSTLVANIGLTQLI), 348-368 (LLTMYPIAISLIFLTFLHSVF), 378-398 (SLLFAFIISLFDGLKAAGIKI), and 414-434 (IGLGWLIPAIAGGICGYILSI).

It belongs to the branched chain amino acid transporter family.

Its subcellular location is the cell membrane. Its function is as follows. Branched-chain amino acid transport system which is involved in the uptake of isoleucine and valine. Probably does not transport leucine. Together with BcaP and BraB, plays an important role in the activation of CodY, a branched-chain amino acid-responsive transcriptional regulator that controls the expression of several dozen transcription units in B.subtilis. In Bacillus subtilis (strain 168), this protein is Branched-chain amino acid permease BrnQ.